We begin with the raw amino-acid sequence, 446 residues long: UDP-N-acetylglucosamine--dolichyl-phosphate N-acetylglucosaminephosphotransferase (446 aa).

A run of 2 helical transmembrane segments spans residues 1 to 21 (MIES…LMNQ) and 25 to 45 (PLLS…MFIP). Residues 59 to 61 (KDM) and glutamate 71 contribute to the UDP-N-acetyl-alpha-D-glucosamine site. 2 consecutive transmembrane segments (helical) span residues 73–93 (MGAV…PVLF) and 123–143 (LLGA…LGIL). Residue lysine 154 participates in dolichyl phosphate binding. Transmembrane regions (helical) follow at residues 155-175 (FFLP…DYGV) and 191-211 (SLIN…IFCP). 208-216 (IFCPNSINI) serves as a coordination point for dolichyl phosphate. A Mg(2+)-binding site is contributed by asparagine 215. Transmembrane regions (helical) follow at residues 216–236 (IIAG…LVIA), 254–274 (AHLL…GLLK), 282–302 (VFVG…VGIL), and 311–331 (LFFI…FGLV). Asparagine 221 contributes to the UDP-N-acetyl-alpha-D-glucosamine binding site. Aspartate 286 lines the Mg(2+) pocket. 335 to 337 (RHR) is a UDP-N-acetyl-alpha-D-glucosamine binding site. N-linked (GlcNAc...) asparagine glycosylation occurs at asparagine 395. The chain crosses the membrane as a helical span at residues 412–432 (DHLTICIMGLQLLTGIFGLII).

Belongs to the glycosyltransferase 4 family. It depends on Mg(2+) as a cofactor.

It is found in the endoplasmic reticulum membrane. It carries out the reaction a di-trans,poly-cis-dolichyl phosphate + UDP-N-acetyl-alpha-D-glucosamine = an N-acetyl-alpha-D-glucosaminyl-diphospho-di-trans,poly-cis-dolichol + UMP. It functions in the pathway protein modification; protein glycosylation. Inhibited by natural nucleoside antibiotic tunicamycin, which acts as a structural analog and competitor of UDP-GlcNAc. In terms of biological role, UDP-N-acetylglucosamine--dolichyl-phosphate N-acetylglucosaminephosphotransferase that operates in the biosynthetic pathway of dolichol-linked oligosaccharides, the glycan precursors employed in protein asparagine (N)-glycosylation. The assembly of dolichol-linked oligosaccharides begins on the cytosolic side of the endoplasmic reticulum membrane and finishes in its lumen. The sequential addition of sugars to dolichol pyrophosphate produces dolichol-linked oligosaccharides containing fourteen sugars, including two GlcNAcs, nine mannoses and three glucoses. Once assembled, the oligosaccharide is transferred from the lipid to nascent proteins by oligosaccharyltransferases. Catalyzes the initial step of dolichol-linked oligosaccharide biosynthesis, transfering GlcNAc-1-P from cytosolic UDP-GlcNAc onto the carrier lipid dolichyl phosphate (P-dolichol), yielding GlcNAc-P-P-dolichol embedded in the cytoplasmic leaflet of the endoplasmic reticulum membrane. The polypeptide is UDP-N-acetylglucosamine--dolichyl-phosphate N-acetylglucosaminephosphotransferase (gpt2) (Schizosaccharomyces pombe (strain 972 / ATCC 24843) (Fission yeast)).